A 314-amino-acid polypeptide reads, in one-letter code: Homeobox protein knotted-1-like 3 (314 aa).

One can recognise an ELK domain in the interval 218–238 (ELKIELKQGFKSRIEDVREEI). A DNA-binding region (homeobox; TALE-type) is located at residues 239–302 (LRKRRAGKLP…NQRKRNWHNN (64 aa)).

It belongs to the TALE/KNOX homeobox family. As to expression, isoform 1 is expressed in roots and flowers, and at lower levels in leaf blades and leaf sheaths. Isoform 2 is expressed in roots and flowers.

Its subcellular location is the nucleus. This Oryza sativa subsp. japonica (Rice) protein is Homeobox protein knotted-1-like 3 (HOS66).